The chain runs to 773 residues: Ribosomal protein S6 kinase alpha-4 (773 aa).

Residues 33–301 enclose the Protein kinase 1 domain; the sequence is FALLKVLGTG…AQEVKSHPFF (269 aa). ATP is bound by residues 39–47 and Lys65; that span reads LGTGAYGKV. Asp161 (proton acceptor) is an active-site residue. Phosphoserine; by autocatalysis is present on Ser196. An AGC-kinase C-terminal domain is found at 302-371; it reads QGLDWVALAA…VAPSILFDHN (70 aa). Ser343 carries the post-translational modification Phosphoserine; by MAPK1, MAPK3 and MAPK14. Position 347 is a phosphoserine (Ser347). Ser360 and Ser365 each carry phosphoserine; by autocatalysis. ATP contacts are provided by residues 417–425 and Lys440; that span reads LGQGSFSVC. The 258-residue stretch at 417 to 674 folds into the Protein kinase 2 domain; it reads LGQGSFSVCR…LEGLRSSSWL (258 aa). Catalysis depends on Asp530, which acts as the Proton acceptor. At Thr542 the chain carries Phosphothreonine. Thr568 bears the Phosphothreonine; by MAPK1, MAPK3 and MAPK14 mark. Ser634 and Ser678 each carry phosphoserine. Disordered regions lie at residues 674-696 and 728-773; these read LQDG…SSGP and AKRR…LSPS. Phosphothreonine is present on Thr687. Phosphoserine; by autocatalysis is present on residues Ser737 and Ser745.

The protein belongs to the protein kinase superfamily. AGC Ser/Thr protein kinase family. S6 kinase subfamily. In terms of assembly, forms a complex with either MAPK1/ERK2 or MAPK3/ERK1 in quiescent cells which transiently dissociates following mitogenic stimulation. Also associates with MAPK14/p38-alpha. Activated RPS6KA4 associates with and phosphorylates the NF-kappa-B p65 subunit RELA. The cofactor is Mg(2+). In terms of processing, ser-343 and Thr-568 phosphorylation is required for kinase activity. Ser-343 and Ser-196 are autophosphorylated by the C-terminal kinase domain, and their phosphorylation is essential for the catalytic activity of the N-terminal kinase domain. Phosphorylated at Ser-343, Thr-568 and Thr-687 by MAPK1/ERK2, MAPK3/ERK1 and MAPK14/p38-alpha. Autophosphorylated at Ser-737 and Ser-745 by the N-terminal kinase domain.

It is found in the nucleus. It carries out the reaction L-seryl-[protein] + ATP = O-phospho-L-seryl-[protein] + ADP + H(+). The catalysed reaction is L-threonyl-[protein] + ATP = O-phospho-L-threonyl-[protein] + ADP + H(+). With respect to regulation, activated by phosphorylation at Ser-343, Thr-568 and Thr-687 by MAPK1/ERK2, MAPK3/ERK1 and MAPK14/p38-alpha, and by further autophosphorylation of Ser-196, Ser-360 and Ser-365 by the activated C-terminal kinase domain. Serine/threonine-protein kinase that is required for the mitogen or stress-induced phosphorylation of the transcription factors CREB1 and ATF1 and for the regulation of the transcription factor RELA, and that contributes to gene activation by histone phosphorylation and functions in the regulation of inflammatory genes. Phosphorylates CREB1 and ATF1 in response to mitogenic or stress stimuli such as UV-C irradiation, epidermal growth factor (EGF) and anisomycin. Plays an essential role in the control of RELA transcriptional activity in response to TNF. Phosphorylates 'Ser-10' of histone H3 in response to mitogenics, stress stimuli and EGF, which results in the transcriptional activation of several immediate early genes, including proto-oncogenes c-fos/FOS and c-jun/JUN. May also phosphorylate 'Ser-28' of histone H3. Mediates the mitogen- and stress-induced phosphorylation of high mobility group protein 1 (HMGN1/HMG14). In lipopolysaccharide-stimulated primary macrophages, acts downstream of the Toll-like receptor TLR4 to limit the production of pro-inflammatory cytokines. Functions probably by inducing transcription of the MAP kinase phosphatase DUSP1 and the anti-inflammatory cytokine interleukin 10 (IL10), via CREB1 and ATF1 transcription factors. The protein is Ribosomal protein S6 kinase alpha-4 (Rps6ka4) of Mus musculus (Mouse).